A 648-amino-acid polypeptide reads, in one-letter code: Biosynthetic arginine decarboxylase (648 aa).

Lys-109 is subject to N6-(pyridoxal phosphate)lysine. Residue 291–301 (IDVGGGLGIDF) coordinates substrate.

This sequence belongs to the Orn/Lys/Arg decarboxylase class-II family. SpeA subfamily. Mg(2+) is required as a cofactor. It depends on pyridoxal 5'-phosphate as a cofactor.

The catalysed reaction is L-arginine + H(+) = agmatine + CO2. Catalyzes the biosynthesis of agmatine from arginine. The sequence is that of Biosynthetic arginine decarboxylase from Prochlorococcus marinus subsp. pastoris (strain CCMP1986 / NIES-2087 / MED4).